The chain runs to 174 residues: RNA pyrophosphohydrolase (174 aa).

A Nudix hydrolase domain is found at 6–149; it reads GFRANVGIII…KRDVYRKVMK (144 aa). The Nudix box signature appears at 38–59; it reads GGVDDGESAEEAMYRELYEEVG.

This sequence belongs to the Nudix hydrolase family. RppH subfamily. A divalent metal cation serves as cofactor.

Its function is as follows. Accelerates the degradation of transcripts by removing pyrophosphate from the 5'-end of triphosphorylated RNA, leading to a more labile monophosphorylated state that can stimulate subsequent ribonuclease cleavage. The chain is RNA pyrophosphohydrolase from Shewanella sp. (strain W3-18-1).